The primary structure comprises 744 residues: C-type polyheme cytochrome OmcB (744 aa).

The first 23 residues, 1-23 (MSRKVTKYSAVLAVSLFAAALAG), serve as a signal peptide directing secretion. Cysteine 24 carries the N-palmitoyl cysteine lipid modification. Residue cysteine 24 is the site of S-diacylglycerol cysteine attachment. Positions 48, 51, 52, 81, 84, 85, 107, 110, 111, 141, 144, 145, 185, 188, 189, 225, 228, 229, 303, 306, 307, 382, 385, 386, 430, 433, 434, 480, 483, 484, 555, 558, 559, 587, 590, and 591 each coordinate heme c.

Post-translationally, binds 12 heme c groups per subunit.

The protein localises to the cell outer membrane. Functionally, involved in anaerobic respiration with Fe(3+) as terminal electron acceptor. Acts as an electron-transport mediator in the dissimilatory reduction of Fe(3+). The protein is C-type polyheme cytochrome OmcB (omcB) of Geobacter sulfurreducens (strain DL-1 / KN400).